We begin with the raw amino-acid sequence, 144 residues long: Ribosome maturation factor RimP (144 aa).

Belongs to the RimP family.

It localises to the cytoplasm. Its function is as follows. Required for maturation of 30S ribosomal subunits. The sequence is that of Ribosome maturation factor RimP from Azoarcus sp. (strain BH72).